The following is a 341-amino-acid chain: LIM and senescent cell antigen-like-containing domain protein 2 (341 aa).

5 LIM zinc-binding domains span residues 13–74 (AMCQ…LFAP), 76–133 (CGFC…EKAK), 138–195 (FICQ…KMGI), 196–255 (PICG…LFGD), and 256–315 (VCYN…FPLE). S328 is modified (phosphoserine).

In terms of assembly, interacts with integrin-linked protein kinase 1 (ILK) via the first LIM domain, and in competition with LIMS1. Part of the heterotrimeric IPP complex composed of integrin-linked kinase (ILK), LIMS1 or LIMS2, and PARVA. Interacts with TGFB1I1. As to expression, detected in heart, lung, kidney, liver, urinary bladder, fat, skin, skeletal muscle, uterus, large intestine and testis.

The protein localises to the cell junction. It localises to the focal adhesion. The protein resides in the cell membrane. Adapter protein in a cytoplasmic complex linking beta-integrins to the actin cytoskeleton, bridges the complex to cell surface receptor tyrosine kinases and growth factor receptors. The chain is LIM and senescent cell antigen-like-containing domain protein 2 (Lims2) from Mus musculus (Mouse).